The primary structure comprises 144 residues: Small ribosomal subunit protein bS6 (144 aa).

The segment at 97-144 (DTEQSLIMKSKDEKGDKPERSERRRRDDEEGDAAPAATDTDGDNAEAA) is disordered. A compositionally biased stretch (basic and acidic residues) spans 105–124 (KSKDEKGDKPERSERRRRDD).

Belongs to the bacterial ribosomal protein bS6 family.

Its function is as follows. Binds together with bS18 to 16S ribosomal RNA. The polypeptide is Small ribosomal subunit protein bS6 (Xanthomonas campestris pv. campestris (strain 8004)).